The primary structure comprises 287 residues: Phosphatidylserine decarboxylase proenzyme (287 aa).

Catalysis depends on charge relay system; for autoendoproteolytic cleavage activity residues Asp-90, His-147, and Ser-253. Ser-253 acts as the Schiff-base intermediate with substrate; via pyruvic acid; for decarboxylase activity in catalysis. Ser-253 bears the Pyruvic acid (Ser); by autocatalysis mark.

Belongs to the phosphatidylserine decarboxylase family. PSD-B subfamily. Prokaryotic type I sub-subfamily. As to quaternary structure, heterodimer of a large membrane-associated beta subunit and a small pyruvoyl-containing alpha subunit. Pyruvate serves as cofactor. Post-translationally, is synthesized initially as an inactive proenzyme. Formation of the active enzyme involves a self-maturation process in which the active site pyruvoyl group is generated from an internal serine residue via an autocatalytic post-translational modification. Two non-identical subunits are generated from the proenzyme in this reaction, and the pyruvate is formed at the N-terminus of the alpha chain, which is derived from the carboxyl end of the proenzyme. The autoendoproteolytic cleavage occurs by a canonical serine protease mechanism, in which the side chain hydroxyl group of the serine supplies its oxygen atom to form the C-terminus of the beta chain, while the remainder of the serine residue undergoes an oxidative deamination to produce ammonia and the pyruvoyl prosthetic group on the alpha chain. During this reaction, the Ser that is part of the protease active site of the proenzyme becomes the pyruvoyl prosthetic group, which constitutes an essential element of the active site of the mature decarboxylase.

Its subcellular location is the cell membrane. It carries out the reaction a 1,2-diacyl-sn-glycero-3-phospho-L-serine + H(+) = a 1,2-diacyl-sn-glycero-3-phosphoethanolamine + CO2. The protein operates within phospholipid metabolism; phosphatidylethanolamine biosynthesis; phosphatidylethanolamine from CDP-diacylglycerol: step 2/2. In terms of biological role, catalyzes the formation of phosphatidylethanolamine (PtdEtn) from phosphatidylserine (PtdSer). This is Phosphatidylserine decarboxylase proenzyme from Aliivibrio fischeri (strain MJ11) (Vibrio fischeri).